We begin with the raw amino-acid sequence, 80 residues long: Delta-actitoxin-Amc2a (80 aa).

An N-terminal signal peptide occupies residues 1–19 (MNKVLFLCLVVLCATSAFA). Residues 20-30 (AEEEYVERAPV) constitute a propeptide that is removed on maturation. Cystine bridges form between Cys-37-Cys-73, Cys-39-Cys-65, and Cys-55-Cys-74. Pro-56 is subject to Hydroxyproline.

Belongs to the sea anemone type 3 (BDS) potassium channel toxin family.

It localises to the secreted. The protein localises to the nematocyst. In terms of biological role, neurotoxon that induces paralysis when injected into crabs. The chain is Delta-actitoxin-Amc2a from Antheopsis maculata (Sea anemone).